Here is a 234-residue protein sequence, read N- to C-terminus: Large ribosomal subunit protein uL1 (234 aa).

The protein belongs to the universal ribosomal protein uL1 family. In terms of assembly, part of the 50S ribosomal subunit.

Its function is as follows. Binds directly to 23S rRNA. The L1 stalk is quite mobile in the ribosome, and is involved in E site tRNA release. In terms of biological role, protein L1 is also a translational repressor protein, it controls the translation of the L11 operon by binding to its mRNA. The polypeptide is Large ribosomal subunit protein uL1 (Prochlorococcus marinus (strain MIT 9211)).